The chain runs to 73 residues: UPF0154 protein LGAS_0795 (73 aa).

Residues 3-23 form a helical membrane-spanning segment; the sequence is LGLAIFLIIIALLIGLVGGFY.

Belongs to the UPF0154 family.

The protein resides in the cell membrane. The chain is UPF0154 protein LGAS_0795 from Lactobacillus gasseri (strain ATCC 33323 / DSM 20243 / BCRC 14619 / CIP 102991 / JCM 1131 / KCTC 3163 / NCIMB 11718 / NCTC 13722 / AM63).